The primary structure comprises 426 residues: Dihydroorotase (426 aa).

H58 and H60 together coordinate Zn(2+). Residues 60-62 and N92 contribute to the substrate site; that span reads HLR. Zn(2+) contacts are provided by D150, H177, and H230. N276 contributes to the substrate binding site. D303 contributes to the Zn(2+) binding site. D303 is an active-site residue. Residues H307 and 321 to 322 each bind substrate; that span reads FG.

The protein belongs to the metallo-dependent hydrolases superfamily. DHOase family. Class I DHOase subfamily. Zn(2+) is required as a cofactor.

The catalysed reaction is (S)-dihydroorotate + H2O = N-carbamoyl-L-aspartate + H(+). The protein operates within pyrimidine metabolism; UMP biosynthesis via de novo pathway; (S)-dihydroorotate from bicarbonate: step 3/3. Functionally, catalyzes the reversible cyclization of carbamoyl aspartate to dihydroorotate. The sequence is that of Dihydroorotase from Listeria innocua serovar 6a (strain ATCC BAA-680 / CLIP 11262).